The following is a 197-amino-acid chain: Peptide deformylase (197 aa).

Positions 106 and 148 each coordinate Fe cation. Glu149 is an active-site residue. His152 contributes to the Fe cation binding site.

The protein belongs to the polypeptide deformylase family. Fe(2+) is required as a cofactor.

It carries out the reaction N-terminal N-formyl-L-methionyl-[peptide] + H2O = N-terminal L-methionyl-[peptide] + formate. Removes the formyl group from the N-terminal Met of newly synthesized proteins. Requires at least a dipeptide for an efficient rate of reaction. N-terminal L-methionine is a prerequisite for activity but the enzyme has broad specificity at other positions. This is Peptide deformylase from Mycobacterium sp. (strain JLS).